The following is a 298-amino-acid chain: Fluorinase (298 aa).

S-adenosyl-L-methionine contacts are provided by residues Asp14, 19 to 21 (DDS), Tyr75, Ser156, Asp209, Asn214, 268 to 269 (SR), and 276 to 278 (RNA).

This sequence belongs to the SAM hydrolase / SAM-dependent halogenase family.

The enzyme catalyses fluoride + S-adenosyl-L-methionine = 5'-deoxy-5'-fluoroadenosine + L-methionine. Catalyzes the formation of a C-F bond by combining S-adenosyl-L-methionine (SAM) and fluoride to generate 5'-fluoro-5'-deoxyadenosine (5'-FDA) and L-methionine. This chain is Fluorinase, found in Actinoplanes sp. (strain N902-109).